The chain runs to 68 residues: uncharacterized protein (68 aa).

Residues 24–44 (AHICKCIAMFFVVAGVVLMFF) traverse the membrane as a helical segment.

It localises to the endoplasmic reticulum. Its subcellular location is the membrane. This is an uncharacterized protein from Saccharomyces cerevisiae (strain ATCC 204508 / S288c) (Baker's yeast).